The chain runs to 363 residues: MTNRIRVAVVFGGRSNEHAVSCVSAGSVLRHLDPTRYEAVPIGITPQGGWVLANSDVAAIGLSHEALPSVDAGGTALTLTADPTRGGELVALDDAGAVLGTVDVVFPILHGPFGEDGTLQGMLELAGVPYVGPGVLASAAGMDKEFTKKLLAAEGLPVGTQVVLRPGTATLTEEQRERLGLPVFVKPARAGSSIGITKVDDWAALDTAIAAAREHDPKVIVEAGIVGREVECGVLEFPDGRISASVLAEIRMPEGDGPQFYDFDTKYLDDVCEFDVPAKLDDDIAEQVRELAVRAFQALDCQGLARVDFFVTADGPVINEINTMPGFTSISMYPRMWEATGIDYGTLVSTLIETALARGTGLR.

The ATP-grasp domain maps to 148–353; it reads KKLLAAEGLP…YGTLVSTLIE (206 aa). An ATP-binding site is contributed by 176 to 231; sequence RERLGLPVFVKPARAGSSIGITKVDDWAALDTAIAAAREHDPKVIVEAGIVGREVE. 3 residues coordinate Mg(2+): Asp308, Glu320, and Asn322.

Belongs to the D-alanine--D-alanine ligase family. It depends on Mg(2+) as a cofactor. Mn(2+) serves as cofactor.

The protein localises to the cytoplasm. It carries out the reaction 2 D-alanine + ATP = D-alanyl-D-alanine + ADP + phosphate + H(+). The protein operates within cell wall biogenesis; peptidoglycan biosynthesis. Cell wall formation. This is D-alanine--D-alanine ligase from Nocardia farcinica (strain IFM 10152).